The sequence spans 930 residues: Protein translocase subunit SecA (930 aa).

Residues Gln-87, 105 to 109 (GEGKT), and Asp-515 each bind ATP. Zn(2+) contacts are provided by Cys-914, Cys-916, Cys-925, and His-926.

It belongs to the SecA family. In terms of assembly, monomer and homodimer. Part of the essential Sec protein translocation apparatus which comprises SecA, SecYEG and auxiliary proteins SecDF-YajC and YidC. Zn(2+) is required as a cofactor.

The protein localises to the cell inner membrane. Its subcellular location is the cytoplasm. The catalysed reaction is ATP + H2O + cellular proteinSide 1 = ADP + phosphate + cellular proteinSide 2.. In terms of biological role, part of the Sec protein translocase complex. Interacts with the SecYEG preprotein conducting channel. Has a central role in coupling the hydrolysis of ATP to the transfer of proteins into and across the cell membrane, serving both as a receptor for the preprotein-SecB complex and as an ATP-driven molecular motor driving the stepwise translocation of polypeptide chains across the membrane. The protein is Protein translocase subunit SecA of Cupriavidus metallidurans (strain ATCC 43123 / DSM 2839 / NBRC 102507 / CH34) (Ralstonia metallidurans).